The primary structure comprises 240 residues: UDP-2,3-diacylglucosamine hydrolase (240 aa).

Mn(2+)-binding residues include aspartate 8, histidine 10, aspartate 41, asparagine 79, and histidine 114. Residue 79-80 (NR) coordinates substrate. Substrate-binding residues include aspartate 122, serine 160, asparagine 164, lysine 167, and histidine 195. Residues histidine 195 and histidine 197 each coordinate Mn(2+).

Belongs to the LpxH family. Mn(2+) is required as a cofactor.

The protein resides in the cell inner membrane. It carries out the reaction UDP-2-N,3-O-bis[(3R)-3-hydroxytetradecanoyl]-alpha-D-glucosamine + H2O = 2-N,3-O-bis[(3R)-3-hydroxytetradecanoyl]-alpha-D-glucosaminyl 1-phosphate + UMP + 2 H(+). It functions in the pathway glycolipid biosynthesis; lipid IV(A) biosynthesis; lipid IV(A) from (3R)-3-hydroxytetradecanoyl-[acyl-carrier-protein] and UDP-N-acetyl-alpha-D-glucosamine: step 4/6. Hydrolyzes the pyrophosphate bond of UDP-2,3-diacylglucosamine to yield 2,3-diacylglucosamine 1-phosphate (lipid X) and UMP by catalyzing the attack of water at the alpha-P atom. Involved in the biosynthesis of lipid A, a phosphorylated glycolipid that anchors the lipopolysaccharide to the outer membrane of the cell. In Salmonella paratyphi C (strain RKS4594), this protein is UDP-2,3-diacylglucosamine hydrolase.